The following is a 101-amino-acid chain: Putative regulatory protein PrgT (101 aa).

Functionally, might be involved in the expression of prgA, but is not required for activation of the expression of prgB. In Enterococcus faecalis (strain ATCC 47077 / OG1RF), this protein is Putative regulatory protein PrgT (prgT).